A 485-amino-acid polypeptide reads, in one-letter code: tRNA sulfurtransferase (485 aa).

In terms of domain architecture, THUMP spans 63 to 167 (DKLVERLSCM…NELLYLVTAI (105 aa)). ATP-binding positions include 185–186 (LI), K267, G289, and Q298. C346 and C458 are disulfide-bonded. Residues 406 to 485 (LAENEVILDI…FNNIKVYRQN (80 aa)) form the Rhodanese domain. The active-site Cysteine persulfide intermediate is C458.

The protein belongs to the ThiI family.

Its subcellular location is the cytoplasm. The catalysed reaction is [ThiI sulfur-carrier protein]-S-sulfanyl-L-cysteine + a uridine in tRNA + 2 reduced [2Fe-2S]-[ferredoxin] + ATP + H(+) = [ThiI sulfur-carrier protein]-L-cysteine + a 4-thiouridine in tRNA + 2 oxidized [2Fe-2S]-[ferredoxin] + AMP + diphosphate. It carries out the reaction [ThiS sulfur-carrier protein]-C-terminal Gly-Gly-AMP + S-sulfanyl-L-cysteinyl-[cysteine desulfurase] + AH2 = [ThiS sulfur-carrier protein]-C-terminal-Gly-aminoethanethioate + L-cysteinyl-[cysteine desulfurase] + A + AMP + 2 H(+). The protein operates within cofactor biosynthesis; thiamine diphosphate biosynthesis. Functionally, catalyzes the ATP-dependent transfer of a sulfur to tRNA to produce 4-thiouridine in position 8 of tRNAs, which functions as a near-UV photosensor. Also catalyzes the transfer of sulfur to the sulfur carrier protein ThiS, forming ThiS-thiocarboxylate. This is a step in the synthesis of thiazole, in the thiamine biosynthesis pathway. The sulfur is donated as persulfide by IscS. In Tolumonas auensis (strain DSM 9187 / NBRC 110442 / TA 4), this protein is tRNA sulfurtransferase.